Reading from the N-terminus, the 541-residue chain is MLPFDPSTRYDRQVRLWGEEGQASIGSTSACVLGSDSLATEILKSLVLAGVQSFYVVDDAKVEQADIGQNFFLHADDIGRSRAEATLEKLTELNPSVSGSASSQPPTALAMEDVEKLTTFSVVVAANQNEEIDTTFAKVLYNIRVPFICIKTFGLIGTIRICIKEHTIANSHEENPRPDLRLDAPFSKLIEMINETNLDEMTLEQLRHTPYILLHFKALEVFRKQRNDPEAFPSTTAERKELQAILMSFRRSSEESGTKDSENFDEAKAAVIRAFQRTTIGSSVKSILSSPQCSTSTRPFWLICEALRRFVTENNNLLPLRGTLPDMTSDSSRYTRLATLFHEKALSDAQEVLRLTREVEKERGVGDVISDDVCYRFCKNADRIRVQYGDVLDYNEETKAIVEKIRESNIDEETRNQKVDEATWMLLMRAVGRFQKEKGRYPGTNGVPVSIDAQDLKKRVEVLIREALKDEQDFTSISNKVTDTAIAEICRFGAAELHVISSYVGGIAAQEIIKLATNQYVPIDNTFIFDGHTQESATFKF.

This sequence belongs to the ubiquitin-activating E1 family. ULA1 subfamily. In terms of assembly, heterodimer of uba-3 and ula-1. The complex binds NEDD8 and ubc-12.

It functions in the pathway protein modification; protein neddylation. Its function is as follows. Regulatory subunit of the dimeric uba-3-ula-1 E1 enzyme. E1 activates NEDD8 by first adenylating its C-terminal glycine residue with ATP, thereafter linking this residue to the side chain of the catalytic cysteine, yielding a NEDD8-rfl-1 (uba-3) thioester and free AMP. E1 finally transfers NEDD8 to the catalytic cysteine of ubc-12. Required for rfl-1 (uba-3) nuclear localization during early embryonic development. In Caenorhabditis elegans, this protein is NEDD8-activating enzyme E1 regulatory subunit (ula-1).